The following is a 548-amino-acid chain: uncharacterized protein (548 aa).

Positions 8–200 (KLFADMIIQG…LLCVYEGFLK (193 aa)) constitute a DhaL domain.

This is an uncharacterized protein from Staphylococcus aureus (strain MRSA252).